Here is a 206-residue protein sequence, read N- to C-terminus: Lipid A acyltransferase PagP (206 aa).

Residues 1-22 (MKQMVCWLTAGLLTLGGLPARA) form the signal peptide. Residues 26–46 (VPAVPETPAAPAAPAVQETPA) show a composition bias toward low complexity. The interval 26–50 (VPAVPETPAAPAAPAVQETPASSAA) is disordered. Catalysis depends on residues histidine 80, aspartate 123, and serine 124.

This sequence belongs to the lipid A palmitoyltransferase family. As to quaternary structure, homodimer.

Its subcellular location is the cell outer membrane. It catalyses the reaction a lipid A + a 1,2-diacyl-sn-glycero-3-phosphocholine = a hepta-acyl lipid A + a 2-acyl-sn-glycero-3-phosphocholine. The catalysed reaction is a lipid IVA + a 1,2-diacyl-sn-glycero-3-phosphocholine = a lipid IVB + a 2-acyl-sn-glycero-3-phosphocholine. It carries out the reaction a lipid IIA + a 1,2-diacyl-sn-glycero-3-phosphocholine = a lipid IIB + a 2-acyl-sn-glycero-3-phosphocholine. Its function is as follows. Transfers a fatty acid residue from the sn-1 position of a phospholipid to the N-linked hydroxyfatty acid chain on the proximal unit of lipid A or its precursors. This is Lipid A acyltransferase PagP from Laribacter hongkongensis (strain HLHK9).